A 564-amino-acid chain; its full sequence is Esterase FE4 (564 aa).

The first 23 residues, 1-23, serve as a signal peptide directing secretion; that stretch reads MKNTCGILLNLFLFIGCFLTCSA. N81 carries N-linked (GlcNAc...) asparagine glycosylation. C89 and C106 are joined by a disulfide. Residue S214 is the Acyl-ester intermediate of the active site. C266 and C277 are disulfide-bonded. N269 is a glycosylation site (N-linked (GlcNAc...) asparagine). The active-site Charge relay system is E339. N-linked (GlcNAc...) asparagine glycosylation is found at N371, N404, and N443. The active-site Charge relay system is H463.

It belongs to the type-B carboxylesterase/lipase family.

The enzyme catalyses a carboxylic ester + H2O = an alcohol + a carboxylate + H(+). Overproduction of nonspecific esterases is a common mechanism of resistance to organophosphate insecticides. The chain is Esterase FE4 from Myzus persicae (Green peach aphid).